The following is a 388-amino-acid chain: Xylose isomerase (388 aa).

Residues His54 and Asp57 contribute to the active site. Residues Glu181, Glu217, His220, Asp245, Asp255, Asp257, and Asp287 each coordinate Mg(2+).

It belongs to the xylose isomerase family. In terms of assembly, homotetramer. The cofactor is Mg(2+).

It localises to the cytoplasm. It catalyses the reaction alpha-D-xylose = alpha-D-xylulofuranose. In Streptomyces olivaceoviridis (Streptomyces corchorusii), this protein is Xylose isomerase.